Reading from the N-terminus, the 821-residue chain is PX domain-containing protein C1450.12 (821 aa).

Residues 171-310 form the PX domain; sequence AYVLGVRQST…SFLTDDPVTL (140 aa). Residues 235-271 form a disordered region; sequence KDDHDTYLNSSEDSTLSPLPSRSSDTNDPQSDSQHVL. Over residues 241–268 the composition is skewed to polar residues; that stretch reads YLNSSEDSTLSPLPSRSSDTNDPQSDSQ. Residues Thr-260 and Thr-597 each carry the phosphothreonine modification. Acidic residues-rich tracts occupy residues 737-746 and 754-766; these read GDEDDQDEND and EHMEDDDSVEEFD. Residues 737-766 form a disordered region; it reads GDEDDQDENDQVTKVEEEHMEDDDSVEEFD. Ser-761 bears the Phosphoserine mark.

Its subcellular location is the mitochondrion membrane. This chain is PX domain-containing protein C1450.12, found in Schizosaccharomyces pombe (strain 972 / ATCC 24843) (Fission yeast).